Here is a 359-residue protein sequence, read N- to C-terminus: Phosphoserine aminotransferase (359 aa).

R41 contributes to the L-glutamate binding site. Residues 75–76 (AS), W101, T152, D171, and Q194 each bind pyridoxal 5'-phosphate. An N6-(pyridoxal phosphate)lysine modification is found at K195. 236–237 (NT) contacts pyridoxal 5'-phosphate.

It belongs to the class-V pyridoxal-phosphate-dependent aminotransferase family. SerC subfamily. As to quaternary structure, homodimer. It depends on pyridoxal 5'-phosphate as a cofactor.

The protein localises to the cytoplasm. The enzyme catalyses O-phospho-L-serine + 2-oxoglutarate = 3-phosphooxypyruvate + L-glutamate. It catalyses the reaction 4-(phosphooxy)-L-threonine + 2-oxoglutarate = (R)-3-hydroxy-2-oxo-4-phosphooxybutanoate + L-glutamate. It functions in the pathway amino-acid biosynthesis; L-serine biosynthesis; L-serine from 3-phospho-D-glycerate: step 2/3. It participates in cofactor biosynthesis; pyridoxine 5'-phosphate biosynthesis; pyridoxine 5'-phosphate from D-erythrose 4-phosphate: step 3/5. Catalyzes the reversible conversion of 3-phosphohydroxypyruvate to phosphoserine and of 3-hydroxy-2-oxo-4-phosphonooxybutanoate to phosphohydroxythreonine. In Acinetobacter baylyi (strain ATCC 33305 / BD413 / ADP1), this protein is Phosphoserine aminotransferase.